A 664-amino-acid chain; its full sequence is Cyclic nucleotide-gated channel alpha-2 (664 aa).

A compositionally biased stretch (polar residues) spans 1–10 (MMTEKSNGVK). The interval 1–51 (MMTEKSNGVKSSPANNHNHHPPPSIKANGKDDHRAGSRPQSVAADDDTSPE) is disordered. The Cytoplasmic portion of the chain corresponds to 1-146 (MMTEKSNGVK…PAGDWYYRWL (146 aa)). Residues 147–168 (FVIAMPVLYNWCLLVARACFSD) form a helical membrane-spanning segment. At 169–178 (LQRNYFVVWL) the chain is on the extracellular side. The helical transmembrane segment at 179–199 (VLDYFSDTVYIADLIIRLRTG) threads the bilayer. At 200–224 (FLEQGLLVKDPKKLRDNYIHTLQFK) the chain is on the cytoplasmic side. A helical membrane pass occupies residues 225–243 (LDVASIIPTDLIYFAVGIH). The Extracellular portion of the chain corresponds to 244–248 (SPEVR). Residues 249 to 267 (FNRLLHFARMFEFFDRTET) traverse the membrane as a helical segment. The Cytoplasmic segment spans residues 268–274 (RTSYPNI). The ion conduction pathway stretch occupies residues 272–380 (PNIFRISNLV…GNVGSMISNM (109 aa)). A helical membrane pass occupies residues 275–298 (FRISNLVLYILVIIHWNACIYYVI). The Extracellular portion of the chain corresponds to 299 to 321 (SKSIGFGVDTWVYPNITDPEYGY). Helical transmembrane passes span 322–356 (LARE…LFVI) and 357–381 (FDFL…SNMN). The interval 339–342 (TIGE) is selectivity filter. The C-linker stretch occupies residues 382-458 (ATRAEFQAKI…STLKKVRIFQ (77 aa)). At 382–664 (ATRAEFQAKI…INTPEPTAAE (283 aa)) the chain is on the cytoplasmic side. Positions 462–582 (AGLLVELVLK…EERGREILMK (121 aa)) are cyclic nucleotide-binding domain. Positions 522, 525, 538, and 539 each coordinate 3',5'-cyclic GMP. 2 residues coordinate 3',5'-cyclic AMP: Arg538 and Thr539. Residues 599–653 (VQEKLEQLETNMDTLYTRFARLLAEYTGAQQKLKQRITVLETKMKQNHEDDYLSD) adopt a coiled-coil conformation.

It belongs to the cyclic nucleotide-gated cation channel (TC 1.A.1.5) family. CNGA2 subfamily. As to quaternary structure, the olfactory cyclic nucleotide-gated channel is an heterotetramer composed of CNGA2, CNGA4 and CNGB1b subunits with 2:1:1 stoichiometry. As to expression, olfactory neurons. Widely expressed in brain, enriched in deep cerebellar nuclei, olfactory bulb mitral cells and cerebellar Purkinje neurons. Expressed in olfactory sensory cilia (at protein level).

The protein resides in the cell projection. It is found in the cilium membrane. The enzyme catalyses Ca(2+)(in) = Ca(2+)(out). It catalyses the reaction Na(+)(in) = Na(+)(out). The catalysed reaction is K(+)(in) = K(+)(out). It carries out the reaction NH4(+)(in) = NH4(+)(out). The enzyme catalyses Rb(+)(in) = Rb(+)(out). It catalyses the reaction Li(+)(in) = Li(+)(out). The catalysed reaction is Cs(+)(in) = Cs(+)(out). Its activity is regulated as follows. The channel activity is inhibited by L-cis diltiazem. In terms of biological role, pore-forming subunit of the olfactory cyclic nucleotide-gated channel. Operates in the cilia of olfactory sensory neurons where chemical stimulation of the odorant is converted to an electrical signal. Mediates odorant-induced cAMP-dependent Ca(2+) influx triggering neuron depolarization. The rise of intracellular Ca(2+) levels potentiates the olfactory response by activating Ca(2+)-dependent Cl(-) channels, but it also serves as a negative feedback signal to desensitize the channel for rapid adaptation to odorants. Conducts cAMP- and cGMP-gated ion currents, with permeability for monovalent and divalent cations. In Rattus norvegicus (Rat), this protein is Cyclic nucleotide-gated channel alpha-2.